The primary structure comprises 285 residues: Phospholipid phosphatase 1 (285 aa).

The Cytoplasmic portion of the chain corresponds to methionine 1–arginine 6. The PDZ-binding; involved in localization to the apical cell membrane signature appears at alanine 5–leucine 7. A helical transmembrane segment spans residues leucine 7–leucine 27. Residues threonine 28–threonine 53 are Extracellular-facing. Residues isoleucine 54–glycine 74 traverse the membrane as a helical segment. The Cytoplasmic portion of the chain corresponds to glutamate 75–tyrosine 94. A helical membrane pass occupies residues isoleucine 95–leucine 115. The Extracellular segment spans residues threonine 116–leucine 165. The tract at residues lysine 120–proline 128 is phosphatase sequence motif I. N-linked (GlcNAc...) asparagine glycosylation occurs at asparagine 142. A helical membrane pass occupies residues serine 166–leucine 186. The segment at tyrosine 168 to histidine 171 is phosphatase sequence motif II. Histidine 171 acts as the Proton donors in catalysis. Residues glutamine 187–arginine 199 lie on the Cytoplasmic side of the membrane. The helical transmembrane segment at proline 200–aspartate 220 threads the bilayer. The tract at residues serine 216–aspartate 227 is phosphatase sequence motif III. Topologically, residues tyrosine 221–leucine 229 are extracellular. The active-site Nucleophile is histidine 223. Residues threonine 230–phenylalanine 250 form a helical membrane-spanning segment. The Cytoplasmic portion of the chain corresponds to lysine 251–proline 285. A compositionally biased stretch (basic and acidic residues) spans arginine 260–leucine 269. The disordered stretch occupies residues arginine 260–proline 285.

Belongs to the PA-phosphatase related phosphoesterase family. In terms of assembly, forms functional homodimers and homooligomers that are not required for substrate recognition and catalytic activity. Can also form heterooligomers with PLPP2 and PLPP3. N-glycosylated. N-linked sugars are of the complex type. N-glycosylation is not required for the phosphatase activity.

The protein localises to the cell membrane. The protein resides in the apical cell membrane. It is found in the membrane raft. Its subcellular location is the membrane. It localises to the caveola. It catalyses the reaction a 1,2-diacyl-sn-glycero-3-phosphate + H2O = a 1,2-diacyl-sn-glycerol + phosphate. The catalysed reaction is 1,2-dihexadecanoyl-sn-glycero-3-phosphate + H2O = 1,2-dihexadecanoyl-sn-glycerol + phosphate. The enzyme catalyses 1,2-di-(9Z-octadecenoyl)-sn-glycero-3-phosphate + H2O = 1,2-di-(9Z-octadecenoyl)-sn-glycerol + phosphate. It carries out the reaction a monoacyl-sn-glycero-3-phosphate + H2O = a monoacylglycerol + phosphate. It catalyses the reaction (9Z)-octadecenoyl-sn-glycero-3-phosphate + H2O = (9Z-octadecenoyl)-glycerol + phosphate. The catalysed reaction is a 1-acyl-sn-glycero-3-phosphate + H2O = a 1-acyl-sn-glycerol + phosphate. The enzyme catalyses 1-(9Z-octadecenoyl)-sn-glycero-3-phosphate + H2O = 1-(9Z-octadecenoyl)-sn-glycerol + phosphate. It carries out the reaction a 1,2-diacyl-sn-glycerol 3-diphosphate + H2O = a 1,2-diacyl-sn-glycero-3-phosphate + phosphate + H(+). It catalyses the reaction sphing-4-enine 1-phosphate + H2O = sphing-4-enine + phosphate. The catalysed reaction is an N-acylsphing-4-enine 1-phosphate + H2O = an N-acylsphing-4-enine + phosphate. The enzyme catalyses N-(octanoyl)-sphing-4-enine-1-phosphate + H2O = N-octanoylsphing-4-enine + phosphate. It carries out the reaction N-(9Z-octadecenoyl)-ethanolamine phosphate + H2O = N-(9Z-octadecenoyl) ethanolamine + phosphate. It catalyses the reaction 1-hexadecanoyl-2-(9Z-octadecenoyl)-sn-glycero-3-phosphate + H2O = 1-hexadecanoyl-2-(9Z-octadecenoyl)-sn-glycerol + phosphate. Its pathway is lipid metabolism; phospholipid metabolism. Magnesium-independent phospholipid phosphatase. Insensitive to N-ethylmaleimide. Magnesium-independent phospholipid phosphatase of the plasma membrane that catalyzes the dephosphorylation of a variety of glycerolipid and sphingolipid phosphate esters including phosphatidate/PA, lysophosphatidate/LPA, diacylglycerol pyrophosphate/DGPP, sphingosine 1-phosphate/S1P and ceramide 1-phosphate/C1P. Also acts on N-oleoyl ethanolamine phosphate/N-(9Z-octadecenoyl)-ethanolamine phosphate, a potential physiological compound. Through its extracellular phosphatase activity allows both the hydrolysis and the cellular uptake of these bioactive lipid mediators from the milieu, regulating signal transduction in different cellular processes. It is for instance essential for the extracellular hydrolysis of S1P and subsequent conversion into intracellular S1P. Involved in the regulation of inflammation, platelets activation, cell proliferation and migration among other processes. May also have an intracellular activity to regulate phospholipid-mediated signaling pathways. In Cavia porcellus (Guinea pig), this protein is Phospholipid phosphatase 1.